The primary structure comprises 521 residues: MVVAMATKEEEGGPSSRVPHLPWMRNPVDIDSFSGCPVAHLPRLDPRLVKPLQRMGIESFFPVQVAAWLETIGPGAFERDICINSPTGSGKTLAYALPIVQMLATRKVRCLRALVVLPTRDLALQVKEVFDAIAPVVGLSVGSAVGQSSIADEVSNLIEKSKQGLFPSLDEEYIQMEPQTKVDILVATPGRLMDHISMTKGFSLEHLQYLVVDETDRMLREAYQSWLPTVIQLTRSSDQNHSWSDMNGETLLHPLTTIRRSGVERGFKGKSFPRLAKIVLSATLTQDPSKLSQLELQHPLLLNSGKKRYRIPTKLQSYKLVCKSNLKPLSLIVLLQELRGEKCLVFTSSVESSHRLSTLLEFFEDLPFKFSEYSRLQRESTRRKTLDAFKEGKIDVLIGTDRMARGIHIDGLRYVINYDMPPYVKTYIHRAGRTARAGESGSCFTFLRKHEVKAFDKMLKKADNSSCSLHSLPEESVETLRPVFSSALKKLEESLESEATKKSKSGDKAPNASKRKRTINT.

A disordered region spans residues methionine 1–histidine 20. The short motif at cysteine 36 to valine 65 is the Q motif element. In terms of domain architecture, Helicase ATP-binding spans isoleucine 72–leucine 302. Serine 85–threonine 92 is an ATP binding site. The DEAD box motif lies at aspartate 213–aspartate 216. The Helicase C-terminal domain maps to serine 330 to leucine 480. Positions leucine 495–aspartate 507 are enriched in basic and acidic residues. A disordered region spans residues leucine 495 to threonine 521.

It belongs to the DEAD box helicase family. DDX51/DBP6 subfamily.

It catalyses the reaction ATP + H2O = ADP + phosphate + H(+). The chain is DEAD-box ATP-dependent RNA helicase 1 from Oryza sativa subsp. japonica (Rice).